The chain runs to 250 residues: UPF0246 protein cce_3295 (250 aa).

Belongs to the UPF0246 family.

This chain is UPF0246 protein cce_3295, found in Crocosphaera subtropica (strain ATCC 51142 / BH68) (Cyanothece sp. (strain ATCC 51142)).